We begin with the raw amino-acid sequence, 400 residues long: NADH-ubiquinone oxidoreductase 49 kDa subunit (400 aa).

The protein belongs to the complex I 49 kDa subunit family.

The protein resides in the mitochondrion. The catalysed reaction is a ubiquinone + NADH + 5 H(+)(in) = a ubiquinol + NAD(+) + 4 H(+)(out). Its function is as follows. Core subunit of the mitochondrial membrane respiratory chain NADH dehydrogenase (Complex I) that is believed to belong to the minimal assembly required for catalysis. Complex I functions in the transfer of electrons from NADH to the respiratory chain. The immediate electron acceptor for the enzyme is believed to be ubiquinone. Component of the iron-sulfur (IP) fragment of the enzyme. Component of the iron-sulfur (IP) fragment of the enzyme. The polypeptide is NADH-ubiquinone oxidoreductase 49 kDa subunit (NAD7) (Prototheca wickerhamii).